Here is a 922-residue protein sequence, read N- to C-terminus: NEDD4-like E3 ubiquitin-protein ligase WWP1 (922 aa).

Residues 1–116 (MATASPRSDT…IHNRKLERVK (116 aa)) form the C2 domain. Composition is skewed to polar residues over residues 210–219 (GDNTPSSPSQ), 243–278 (NGES…STTV), 286–302 (ILTS…TSAE), 314–323 (DTSNSRSSSA), and 340–351 (RQQSGNANTETL). The interval 210–388 (GDNTPSSPSQ…RPQPLPPGWE (179 aa)) is disordered. WW domains lie at 349–382 (ETLP…RPQP), 381–414 (QPLP…RPTM), 456–489 (GPLP…DPRT), and 496–529 (EPLP…DPRN). Residues 349–531 (ETLPSGWEQR…TTFKDPRNGK (183 aa)) are required for interaction with and ubiquitination of AMOTL2. Required for interaction with YAP1. Residues 588–922 (KPYDLRRRLY…IEETEGFGQE (335 aa)) form the HECT domain. Cys-890 functions as the Glycyl thioester intermediate in the catalytic mechanism.

Interacts with the Crumbs complex components PALS1 and PATJ; interaction with the Crumbs complex is enhanced by WWP1's interaction with AMOTL2 and facilitates WWP1 localization to the plasma membrane. Interaction with the Crumbs complex promotes WWP1 monoubiquitination of AMOTL2, which activates the Hippo signaling pathway. Binds KLF2 and HIVEP3. Binds SCNN1A, SCNN1B, SCNN1G, WBP1, WBP2, DRPLA and adenovirus type 2 PIII. Interacts with RNF11. Interacts with SPART. Interacts with ERBB4 isoforms JM-B CYT-1 and JM-A CYT-1. Interacts with SMAD1, SMAD2, SMAD3, SMAD5, SMAD6, SMAD7, TGFBR1 and TGFBR2. Associates with the TGFBR1:TGFBR2 receptor complex in presence of SMAD7. Interacts with SKIL isoform 1. Interacts with TP63 isoform 1 and isoform 2. Interacts with STAMBP and RNF11. Interacts with NDFIP1 and NDFIP2; this interaction activates the E3 ubiquitin-protein ligase. Interacts with TGIF. Interacts (via WW domains) with ARRDC1, ARRDC2 and ARRDC3. In terms of assembly, (Microbial infection) Interacts with HTLV-1 protein Gag. As to quaternary structure, (Microbial infection) Interacts with ebola virus protein VP40. In terms of processing, auto-ubiquitinated and ubiquitinated by RNF11. In terms of tissue distribution, detected in heart, placenta, pancreas, kidney, liver, skeletal muscle, bone marrow, fetal brain, and at much lower levels in adult brain and lung. Isoform 1 and isoform 5 predominate in all tissues tested, except in testis and bone marrow, where isoform 5 is expressed at much higher levels than isoform 1.

The protein resides in the cytoplasm. Its subcellular location is the cell membrane. The protein localises to the nucleus. It is found in the cell junction. The catalysed reaction is S-ubiquitinyl-[E2 ubiquitin-conjugating enzyme]-L-cysteine + [acceptor protein]-L-lysine = [E2 ubiquitin-conjugating enzyme]-L-cysteine + N(6)-ubiquitinyl-[acceptor protein]-L-lysine.. It participates in protein modification; protein ubiquitination. With respect to regulation, activated by NDFIP1- and NDFIP2-binding. In terms of biological role, E3 ubiquitin-protein ligase which accepts ubiquitin from an E2 ubiquitin-conjugating enzyme in the form of a thioester and then directly transfers the ubiquitin to targeted substrates. Ubiquitinates ERBB4 isoforms JM-A CYT-1 and JM-B CYT-1, KLF2, KLF5 and TP63 and promotes their proteasomal degradation. Ubiquitinates RNF11 without targeting it for degradation. Ubiquitinates and promotes degradation of TGFBR1; the ubiquitination is enhanced by SMAD7. Ubiquitinates SMAD6 and SMAD7. Ubiquitinates and promotes degradation of SMAD2 in response to TGF-beta signaling, which requires interaction with TGIF. Activates the Hippo signaling pathway in response to cell contact inhibition and recruitment to the Crumbs complex at the cell membrane. Monoubiquitinates AMOTL2 which facilitates its interaction with and activation of LATS2. LATS2 then phosphorylates YAP1, excluding it from the nucleus and therefore ultimately represses YAP1-driven transcription of target genes. The polypeptide is NEDD4-like E3 ubiquitin-protein ligase WWP1 (WWP1) (Homo sapiens (Human)).